Reading from the N-terminus, the 120-residue chain is uncharacterized protein (120 aa).

Positions 7–120 (VFAKIITKNL…KLIGLINNND (114 aa)) constitute an HIT domain. A Histidine triad motif motif is present at residues 101–105 (HFHFH).

This is an uncharacterized protein from Rickettsia prowazekii (strain Madrid E).